Consider the following 191-residue polypeptide: Dephospho-CoA kinase (191 aa).

The DPCK domain occupies 3–191 (AIGITGSYAS…KLIKNLECQV (189 aa)). Residue 11 to 16 (ASGKTF) coordinates ATP.

This sequence belongs to the CoaE family.

Its subcellular location is the cytoplasm. The catalysed reaction is 3'-dephospho-CoA + ATP = ADP + CoA + H(+). Its pathway is cofactor biosynthesis; coenzyme A biosynthesis; CoA from (R)-pantothenate: step 5/5. Functionally, catalyzes the phosphorylation of the 3'-hydroxyl group of dephosphocoenzyme A to form coenzyme A. This Rickettsia typhi (strain ATCC VR-144 / Wilmington) protein is Dephospho-CoA kinase.